Here is a 340-residue protein sequence, read N- to C-terminus: Ketol-acid reductoisomerase (NADP(+)) (340 aa).

The 180-residue stretch at 3–182 (VEMLYEADVK…GSARVGLLVT (180 aa)) folds into the KARI N-terminal Rossmann domain. NADP(+) contacts are provided by residues 26–29 (YGSQ), Arg49, Ser53, and 83–86 (DEIQ). The active site involves His108. Residue Gly134 participates in NADP(+) binding. Positions 183–328 (TFKEETEEDL…AELRKAMPFV (146 aa)) constitute a KARI C-terminal knotted domain. The Mg(2+) site is built by Asp191, Glu195, Glu227, and Glu231. Substrate is bound at residue Ser252.

It belongs to the ketol-acid reductoisomerase family. It depends on Mg(2+) as a cofactor.

The catalysed reaction is (2R)-2,3-dihydroxy-3-methylbutanoate + NADP(+) = (2S)-2-acetolactate + NADPH + H(+). The enzyme catalyses (2R,3R)-2,3-dihydroxy-3-methylpentanoate + NADP(+) = (S)-2-ethyl-2-hydroxy-3-oxobutanoate + NADPH + H(+). The protein operates within amino-acid biosynthesis; L-isoleucine biosynthesis; L-isoleucine from 2-oxobutanoate: step 2/4. Its pathway is amino-acid biosynthesis; L-valine biosynthesis; L-valine from pyruvate: step 2/4. Involved in the biosynthesis of branched-chain amino acids (BCAA). Catalyzes an alkyl-migration followed by a ketol-acid reduction of (S)-2-acetolactate (S2AL) to yield (R)-2,3-dihydroxy-isovalerate. In the isomerase reaction, S2AL is rearranged via a Mg-dependent methyl migration to produce 3-hydroxy-3-methyl-2-ketobutyrate (HMKB). In the reductase reaction, this 2-ketoacid undergoes a metal-dependent reduction by NADPH to yield (R)-2,3-dihydroxy-isovalerate. The protein is Ketol-acid reductoisomerase (NADP(+)) of Streptococcus mutans serotype c (strain ATCC 700610 / UA159).